An 846-amino-acid polypeptide reads, in one-letter code: Translation initiation factor IF-2 (846 aa).

The segment at 94–263 (QRSPEEIQAE…HGFQNPTGPV (170 aa)) is disordered. Over residues 96–135 (SPEEIQAEQKRELEERRAAENAARDKVEAEVRQRNEEQAR) the composition is skewed to basic and acidic residues. 2 stretches are compositionally biased toward low complexity: residues 136-148 (RQAA…APAP) and 158-176 (AAPV…ASED). Basic and acidic residues-rich tracts occupy residues 177-206 (AAAR…RGEA) and 230-239 (TTDEESDGAR). The span at 240-253 (RGRGGKSKLKKRNQ) shows a compositional bias: basic residues. The 168-residue stretch at 346 to 513 (SRAPVVTVMG…AVLLQAEILE (168 aa)) folds into the tr-type G domain. Residues 355 to 362 (GHVDHGKT) form a G1 region. 355–362 (GHVDHGKT) contributes to the GTP binding site. The interval 380–384 (GITQH) is G2. A G3 region spans residues 401 to 404 (DTPG). GTP is bound by residues 401 to 405 (DTPGH) and 455 to 458 (NKID). A G4 region spans residues 455 to 458 (NKID). Residues 491–493 (SAK) are G5.

It belongs to the TRAFAC class translation factor GTPase superfamily. Classic translation factor GTPase family. IF-2 subfamily.

It localises to the cytoplasm. In terms of biological role, one of the essential components for the initiation of protein synthesis. Protects formylmethionyl-tRNA from spontaneous hydrolysis and promotes its binding to the 30S ribosomal subunits. Also involved in the hydrolysis of GTP during the formation of the 70S ribosomal complex. This is Translation initiation factor IF-2 from Pseudomonas putida (strain ATCC 700007 / DSM 6899 / JCM 31910 / BCRC 17059 / LMG 24140 / F1).